The chain runs to 314 residues: Fibrinogen-like protein 1 (314 aa).

A signal peptide spans 1 to 22 (MGKIYSFVLVAIALMMGREGWA). Residues 28 to 62 (CLREQVRLRAQVHQLETRVKQQQTMIAQLLHEKEV) adopt a coiled-coil conformation. Positions 76-308 (LGGKRQYADC…SVVMKIRPSD (233 aa)) constitute a Fibrinogen C-terminal domain. 2 disulfide bridges follow: Cys85–Cys114 and Cys250–Cys263.

Homodimer. Interacts (via the Fibrinogen C-terminal domain) with LAG3 (via Ig-like domains 1 and 2). In terms of tissue distribution, mainly expressed in liver. Also expressed in brown adipose tissue.

Its subcellular location is the secreted. In terms of biological role, immune suppressive molecule that inhibits antigen-specific T-cell activation by acting as a major ligand of LAG3. Responsible for LAG3 T-cell inhibitory function. Binds LAG3 independently from MHC class II (MHC-II). Secreted by, and promotes growth of, hepatocytes. In Mus musculus (Mouse), this protein is Fibrinogen-like protein 1 (Fgl1).